The primary structure comprises 356 residues: UDP-N-acetylglucosamine--N-acetylmuramyl-(pentapeptide) pyrophosphoryl-undecaprenol N-acetylglucosamine transferase (356 aa).

Residues 12–14 (TGG), Asn124, Arg163, Ser188, Ile242, 261–266 (ALTVSE), and Gln287 each bind UDP-N-acetyl-alpha-D-glucosamine.

It belongs to the glycosyltransferase 28 family. MurG subfamily.

The protein resides in the cell inner membrane. The catalysed reaction is di-trans,octa-cis-undecaprenyl diphospho-N-acetyl-alpha-D-muramoyl-L-alanyl-D-glutamyl-meso-2,6-diaminopimeloyl-D-alanyl-D-alanine + UDP-N-acetyl-alpha-D-glucosamine = di-trans,octa-cis-undecaprenyl diphospho-[N-acetyl-alpha-D-glucosaminyl-(1-&gt;4)]-N-acetyl-alpha-D-muramoyl-L-alanyl-D-glutamyl-meso-2,6-diaminopimeloyl-D-alanyl-D-alanine + UDP + H(+). It participates in cell wall biogenesis; peptidoglycan biosynthesis. Cell wall formation. Catalyzes the transfer of a GlcNAc subunit on undecaprenyl-pyrophosphoryl-MurNAc-pentapeptide (lipid intermediate I) to form undecaprenyl-pyrophosphoryl-MurNAc-(pentapeptide)GlcNAc (lipid intermediate II). In Azotobacter vinelandii (strain DJ / ATCC BAA-1303), this protein is UDP-N-acetylglucosamine--N-acetylmuramyl-(pentapeptide) pyrophosphoryl-undecaprenol N-acetylglucosamine transferase.